Consider the following 260-residue polypeptide: Glutathione S-transferase domain-containing protein DDB_G0280881 (260 aa).

The GST N-terminal domain maps to 7–96; that stretch reads KVDFIFYTNG…YLAQKYNTFL (90 aa). Positions 102–228 constitute a GST C-terminal domain; it reads NPKENSDVIT…QQISEGFKNF (127 aa).

Belongs to the GST superfamily.

The sequence is that of Glutathione S-transferase domain-containing protein DDB_G0280881 from Dictyostelium discoideum (Social amoeba).